The following is a 264-amino-acid chain: Non-homologous end-joining factor xrc4 (264 aa).

The span at 173–186 (RNNEDNEDNHHINY) shows a compositional bias: basic and acidic residues. Positions 173 to 264 (RNNEDNEDNH…SHESSETVSE (92 aa)) are disordered. Residues 200–209 (QEGVNSSAVS) are compositionally biased toward polar residues. Positions 248–264 (DDSHRRSSHESSETVSE) are enriched in basic and acidic residues.

The protein belongs to the XRCC4-XLF family. XRCC4 subfamily. In terms of assembly, interacts with lig4; the interaction is direct.

It is found in the nucleus. Involved in double-strand break repair via non-homologous end joining (NHEJ); the repair of a double-strand break in DNA in which the two broken ends are rejoined with little or no sequence complementarity. This Schizosaccharomyces pombe (strain 972 / ATCC 24843) (Fission yeast) protein is Non-homologous end-joining factor xrc4.